A 325-amino-acid polypeptide reads, in one-letter code: Beta-ketoacyl-[acyl-carrier-protein] synthase III (325 aa).

Active-site residues include C112 and H250. The tract at residues 251 to 255 (QANIR) is ACP-binding. N280 is an active-site residue.

Belongs to the thiolase-like superfamily. FabH family. In terms of assembly, homodimer.

It is found in the cytoplasm. The enzyme catalyses malonyl-[ACP] + acetyl-CoA + H(+) = 3-oxobutanoyl-[ACP] + CO2 + CoA. Its pathway is lipid metabolism; fatty acid biosynthesis. In terms of biological role, catalyzes the condensation reaction of fatty acid synthesis by the addition to an acyl acceptor of two carbons from malonyl-ACP. Catalyzes the first condensation reaction which initiates fatty acid synthesis and may therefore play a role in governing the total rate of fatty acid production. Possesses both acetoacetyl-ACP synthase and acetyl transacylase activities. Its substrate specificity determines the biosynthesis of branched-chain and/or straight-chain of fatty acids. This Clostridium acetobutylicum (strain ATCC 824 / DSM 792 / JCM 1419 / IAM 19013 / LMG 5710 / NBRC 13948 / NRRL B-527 / VKM B-1787 / 2291 / W) protein is Beta-ketoacyl-[acyl-carrier-protein] synthase III.